A 246-amino-acid chain; its full sequence is MNKLEKEASVFFKKNQESVSQDFKKKVSSIEMFSTSLNSEENQSLDRLFLSETQNLSDEESYQEDVLSVKLLTSQIKAIQKQHVLLLGEKIYNARKILSKSCFSSTTFSSWLDLVFRTKSSAYNALAYYELFISLPSTTLQKEFQSIPYKSAYILAARKGDLKTKVSVIGKVCGMSNASAIRVMDQLLPSSRSKDNQRFFESDLEKNRQLSDLLVELLRIVCSGVFLSPYNENLLQQLFEVYKQKS.

The protein belongs to the UPF0137 (pGP6-D) family.

This chain is Virulence plasmid protein pGP6-D, found in Chlamydia muridarum (strain MoPn / Nigg).